Consider the following 240-residue polypeptide: MKILLIGYGAMNQRVARLAEEKGHEIVGVIENTPKATTPYQQYQHIADVKDADVAIDFSNPNLLFPLLDEEFHLPLVVATTGEKEKLLNKLDELSQNMPVFFSANMSYGVHALTKILAAAVPLLDDFDIELTEAHHNKKVDAPSGTLEKLYDVIVSLKENVTPVYDRHELNEKRQPQDIGIHSIRGGTIVGEHEVLFAGTDETIQITHRAQSKDIFANGAIQAAERLVNKPNGFYTFDNL.

NAD(+) is bound by residues 79–81 and 103–106; these read ATT and SANM. The active-site Proton donor/acceptor is the H135. H136 is a (S)-2,3,4,5-tetrahydrodipicolinate binding site. Catalysis depends on K139, which acts as the Proton donor. 145-146 is a binding site for (S)-2,3,4,5-tetrahydrodipicolinate; the sequence is GT.

Belongs to the DapB family.

It is found in the cytoplasm. The enzyme catalyses (S)-2,3,4,5-tetrahydrodipicolinate + NAD(+) + H2O = (2S,4S)-4-hydroxy-2,3,4,5-tetrahydrodipicolinate + NADH + H(+). The catalysed reaction is (S)-2,3,4,5-tetrahydrodipicolinate + NADP(+) + H2O = (2S,4S)-4-hydroxy-2,3,4,5-tetrahydrodipicolinate + NADPH + H(+). Its pathway is amino-acid biosynthesis; L-lysine biosynthesis via DAP pathway; (S)-tetrahydrodipicolinate from L-aspartate: step 4/4. Its function is as follows. Catalyzes the conversion of 4-hydroxy-tetrahydrodipicolinate (HTPA) to tetrahydrodipicolinate. The chain is 4-hydroxy-tetrahydrodipicolinate reductase from Staphylococcus aureus (strain Mu3 / ATCC 700698).